Consider the following 352-residue polypeptide: Spermidine/putrescine import ATP-binding protein PotA (352 aa).

The 231-residue stretch at 7–237 folds into the ABC transporter domain; the sequence is IELKNVSKKY…PKNKFVANFI (231 aa). 39–46 contributes to the ATP binding site; it reads GPSGCGKT.

The protein belongs to the ABC transporter superfamily. Spermidine/putrescine importer (TC 3.A.1.11.1) family. In terms of assembly, the complex is composed of two ATP-binding proteins (PotA), two transmembrane proteins (PotB and PotC) and a solute-binding protein (PotD).

The protein resides in the cell membrane. The catalysed reaction is ATP + H2O + polyamine-[polyamine-binding protein]Side 1 = ADP + phosphate + polyamineSide 2 + [polyamine-binding protein]Side 1.. Functionally, part of the ABC transporter complex PotABCD involved in spermidine/putrescine import. Responsible for energy coupling to the transport system. This Clostridium acetobutylicum (strain ATCC 824 / DSM 792 / JCM 1419 / IAM 19013 / LMG 5710 / NBRC 13948 / NRRL B-527 / VKM B-1787 / 2291 / W) protein is Spermidine/putrescine import ATP-binding protein PotA.